Consider the following 227-residue polypeptide: 7-cyano-7-deazaguanine synthase (227 aa).

16–26 (FSGGQDSTTCL) contributes to the ATP binding site. Zn(2+) contacts are provided by C194, C202, C205, and C208.

The protein belongs to the QueC family. It depends on Zn(2+) as a cofactor.

The catalysed reaction is 7-carboxy-7-deazaguanine + NH4(+) + ATP = 7-cyano-7-deazaguanine + ADP + phosphate + H2O + H(+). Its pathway is purine metabolism; 7-cyano-7-deazaguanine biosynthesis. In terms of biological role, catalyzes the ATP-dependent conversion of 7-carboxy-7-deazaguanine (CDG) to 7-cyano-7-deazaguanine (preQ(0)). The protein is 7-cyano-7-deazaguanine synthase of Haemophilus influenzae (strain 86-028NP).